The primary structure comprises 185 residues: NAD(P)H-dependent FAD/FMN reductase GTNG_3158 (185 aa).

Anthranilate 3-monooxygenase consists of a reductase component (GTNG_3158) and an oxygenase component HpaH.

It catalyses the reaction FADH2 + NAD(+) = FAD + NADH + 2 H(+). The enzyme catalyses FADH2 + NADP(+) = FAD + NADPH + 2 H(+). Its function is as follows. Involved in the pathway of tryptophan degradation. Reduces FAD/FMN to FADH(2)/FMNH(2), which are subsequently used for the hydroxylation of anthranilate. It can reduce either FAD or flavin mononucleotide (FMN) but prefers FAD. The enzyme has a slight preference for NADPH as acceptor. This chain is NAD(P)H-dependent FAD/FMN reductase GTNG_3158, found in Geobacillus thermodenitrificans (strain NG80-2).